The chain runs to 331 residues: MTIKVGINGFGRIGRIVFRAAQERSDIEIVAINDLLDAEYMAYMLKYDSTHGRFNGTVEVKDGHLIVNGKKIRVTAERDPANLKWNEAGVEVVAEATGLFLTDETARKHITAGAKKVVMTGPSKDSTPMFVRGANFDTYAGQDIVSNASCTTNCLAPLAKVVNDNFGIVEALMTTVHATTATQKTVDGPSHKDWRGGRGASQNIIPSSTGAAKAVGKVLPELNGKLTGMAFRVPTPNVSVVDLTVRLAKPATYEEIKKAMKAASEGAMKGVLGYTEDDVVSTDFNGETCTSVFDAKAGIALNDNFVKLVSWYDNETGYSHKVLDLIAHISK.

NAD(+)-binding positions include R12 to I13, D34, R78, and T120. D-glyceraldehyde 3-phosphate contacts are provided by residues S149–T151, T180, T209–G210, and R232. The Nucleophile role is filled by C150. N314 contacts NAD(+).

It belongs to the glyceraldehyde-3-phosphate dehydrogenase family. In terms of assembly, homotetramer.

The protein resides in the cytoplasm. The catalysed reaction is D-glyceraldehyde 3-phosphate + phosphate + NAD(+) = (2R)-3-phospho-glyceroyl phosphate + NADH + H(+). Its pathway is carbohydrate degradation; glycolysis; pyruvate from D-glyceraldehyde 3-phosphate: step 1/5. In terms of biological role, catalyzes the oxidative phosphorylation of glyceraldehyde 3-phosphate (G3P) to 1,3-bisphosphoglycerate (BPG) using the cofactor NAD. The first reaction step involves the formation of a hemiacetal intermediate between G3P and a cysteine residue, and this hemiacetal intermediate is then oxidized to a thioester, with concomitant reduction of NAD to NADH. The reduced NADH is then exchanged with the second NAD, and the thioester is attacked by a nucleophilic inorganic phosphate to produce BPG. The sequence is that of Glyceraldehyde-3-phosphate dehydrogenase (gapA) from Shimwellia blattae (strain ATCC 29907 / DSM 4481 / JCM 1650 / NBRC 105725 / CDC 9005-74) (Escherichia blattae).